The following is a 343-amino-acid chain: ATPase GET3 (343 aa).

Residue 32-39 (KGGVGKTT) participates in ATP binding. The active site involves D61. ATP-binding residues include E245 and N272. Residues C283 and C286 each coordinate Zn(2+).

It belongs to the arsA ATPase family. As to quaternary structure, homodimer.

The protein resides in the cytoplasm. The protein localises to the endoplasmic reticulum. Its function is as follows. ATPase required for the post-translational delivery of tail-anchored (TA) proteins to the endoplasmic reticulum. Recognizes and selectively binds the transmembrane domain of TA proteins in the cytosol. This complex then targets to the endoplasmic reticulum by membrane-bound receptors, where the tail-anchored protein is released for insertion. This process is regulated by ATP binding and hydrolysis. ATP binding drives the homodimer towards the closed dimer state, facilitating recognition of newly synthesized TA membrane proteins. ATP hydrolysis is required for insertion. Subsequently, the homodimer reverts towards the open dimer state, lowering its affinity for the membrane-bound receptor, and returning it to the cytosol to initiate a new round of targeting. This Pyricularia oryzae (strain 70-15 / ATCC MYA-4617 / FGSC 8958) (Rice blast fungus) protein is ATPase GET3.